A 432-amino-acid chain; its full sequence is Peptidase B (432 aa).

Positions 196 and 201 each coordinate Mn(2+). The active site involves Lys-208. Mn(2+) is bound by residues Asp-219, Asp-278, and Glu-280. Arg-282 is a catalytic residue.

This sequence belongs to the peptidase M17 family. In terms of assembly, homohexamer. Requires Mn(2+) as cofactor.

Its subcellular location is the cytoplasm. The catalysed reaction is Release of an N-terminal amino acid, Xaa, from a peptide or arylamide. Xaa is preferably Glu or Asp but may be other amino acids, including Leu, Met, His, Cys and Gln.. Functionally, probably plays an important role in intracellular peptide degradation. The protein is Peptidase B of Vibrio vulnificus (strain CMCP6).